The chain runs to 72 residues: uncharacterized protein (72 aa).

Positions Tyr-27–Val-55 form a coiled coil.

This is an uncharacterized protein from Schizosaccharomyces pombe (strain 972 / ATCC 24843) (Fission yeast).